The sequence spans 494 residues: Integrin beta-like protein 1 (494 aa).

A signal peptide spans 1-23; the sequence is MHPPGFKNFLLLVSSLFFIGLSA. Intrachain disulfides connect C40–C71, C51–C69, C63–C74, C76–C89, C91–C112, C96–C110, C104–C115, C117–C126, C132–C159, C143–C157, C151–C162, C164–C178, C180–C202, C185–C200, C194–C205, C207–C216, C220–C247, C231–C245, C239–C250, C252–C269, C271–C296, C276–C294, C288–C299, C301–C310, C316–C343, C327–C341, C335–C346, C348–C361, C363–C384, C368–C382, C376–C387, C389–C398, C404–C431, C415–C429, C423–C434, C436–C448, C450–C471, C455–C469, C463–C474, and C476–C485. 10 I-EGF domains span residues 40-90, 91-127, 132-179, 180-217, 220-270, 271-311, 316-362, 363-399, 404-449, and 450-486; these read CRLS…PLCE, CHDW…EACQ, CDLT…KFCE, CDDR…DKCE, CDIT…DTCE, CDER…KKCE, CPLS…KTCE, CDDR…KLCQ, CNMT…EFCD, and CDDR…NACE. Residues 51–95 form an I repeat; the sequence is CRAPGQPPGSALCHDRGRCECGVCICHVTEPGTYFGPLCECHDWV. Positions 51–494 are cysteine-rich tandem repeats; the sequence is CRAPGQPPGS…CEIWLGTEYP (444 aa). One copy of the II repeat lies at 96–142; that stretch reads CETYDGKTCAGHGTCDCGKCKCDVGWSGEACQYPTKCDLTKKISNQM. One copy of the III repeat lies at 143 to 184; it reads CKNSQDVICSNAGTCHCGRCKCDNSDGHGLIYGKFCECDDRE. An IV repeat occupies 185–230; the sequence is CIDDETEEICGGHGKCYCGNCYCEAGWHGDKCEFQCDITPWESKRR. One copy of the V repeat lies at 231–275; sequence CTSPDGKVCSNRGTCVCGECSCHDVDPTGDWGDIHGDTCECDERD. A VI repeat occupies 276–326; that stretch reads CRAVYDRYSDDFCSGHGQCNCGRCDCRAGWYGKKCEHPKNCPLSAEESTRK. The stretch at 327 to 367 is one VII repeat; that stretch reads CQGSSDLPCSGRGRCECGRCTCYPPGDSRVYGKTCECDDRR. The stretch at 368 to 414 is one VIII repeat; sequence CEDLDGVVCGGRGTCSCGRCVCEKGWFGKLCQHPRKCNMTEEQSRSL. A glycan (N-linked (GlcNAc...) asparagine) is linked at N405. Residues 415-454 form an IX repeat; it reads CESADGTLCSGKGSCHCGKCICSGEEWYISGEFCDCDDRD. One copy of the X repeat lies at 455-494; sequence CDKHDGLICTGNGICSCGNCECWDGWNGNACEIWLGTEYP.

It is found in the secreted. In Rattus norvegicus (Rat), this protein is Integrin beta-like protein 1 (Itgbl1).